A 70-amino-acid polypeptide reads, in one-letter code: DNA-directed RNA polymerase subunit omega (70 aa).

It belongs to the RNA polymerase subunit omega family. In terms of assembly, the RNAP catalytic core consists of 2 alpha, 1 beta, 1 beta' and 1 omega subunit. When a sigma factor is associated with the core the holoenzyme is formed, which can initiate transcription.

The catalysed reaction is RNA(n) + a ribonucleoside 5'-triphosphate = RNA(n+1) + diphosphate. In terms of biological role, promotes RNA polymerase assembly. Latches the N- and C-terminal regions of the beta' subunit thereby facilitating its interaction with the beta and alpha subunits. This Staphylococcus saprophyticus subsp. saprophyticus (strain ATCC 15305 / DSM 20229 / NCIMB 8711 / NCTC 7292 / S-41) protein is DNA-directed RNA polymerase subunit omega.